A 213-amino-acid chain; its full sequence is Ribonuclease T (213 aa).

Residues 28–202 (VVVDVETGGF…YDTEQTARLF (175 aa)) enclose the Exonuclease domain. Residues Asp-31, Glu-33, His-189, and Asp-194 each coordinate Mg(2+). His-189 acts as the Proton donor/acceptor in catalysis.

Belongs to the RNase T family. As to quaternary structure, homodimer. Mg(2+) is required as a cofactor.

Its function is as follows. Trims short 3' overhangs of a variety of RNA species, leaving a one or two nucleotide 3' overhang. Responsible for the end-turnover of tRNA: specifically removes the terminal AMP residue from uncharged tRNA (tRNA-C-C-A). Also appears to be involved in tRNA biosynthesis. The chain is Ribonuclease T from Xanthomonas euvesicatoria pv. vesicatoria (strain 85-10) (Xanthomonas campestris pv. vesicatoria).